The sequence spans 379 residues: L-lactate dehydrogenase (379 aa).

An FMN hydroxy acid dehydrogenase domain is found at 1–379; the sequence is MIISSSTDYR…ITSELLVREP (379 aa). Y24 lines the substrate pocket. FMN contacts are provided by S106 and Q127. Y129 is a binding site for substrate. Residue T155 coordinates FMN. A substrate-binding site is contributed by R164. K251 serves as a coordination point for FMN. H275 acts as the Proton acceptor in catalysis. R278 is a substrate binding site. 306–330 serves as a coordination point for FMN; the sequence is DSGIRSGLDVVRMIALGADAAMLGR.

The protein belongs to the FMN-dependent alpha-hydroxy acid dehydrogenase family. The cofactor is FMN.

It is found in the cell membrane. The enzyme catalyses (S)-lactate + A = pyruvate + AH2. Functionally, catalyzes the conversion of L-lactate to pyruvate. Is coupled to the respiratory chain. The chain is L-lactate dehydrogenase from Alcaligenes faecalis.